The following is a 505-amino-acid chain: RNA-splicing ligase RtcB homolog (505 aa).

The Mn(2+) site is built by Asp119, Cys122, His227, His259, and His353. 226 to 230 provides a ligand contact to GMP; it reads NHYAE. GMP contacts are provided by residues 353-354, 402-405, Ser409, 428-431, and Lys504; these read HN, GGSM, and HGAG. His428 functions as the GMP-histidine intermediate in the catalytic mechanism.

This sequence belongs to the RtcB family. As to quaternary structure, catalytic component of the tRNA-splicing ligase complex. The cofactor is Mn(2+).

The protein localises to the nucleus. It is found in the cytoplasm. It carries out the reaction a 3'-end 3'-phospho-ribonucleotide-RNA + a 5'-end dephospho-ribonucleoside-RNA + GTP = a ribonucleotidyl-ribonucleotide-RNA + GMP + diphosphate. The enzyme catalyses a 3'-end 2',3'-cyclophospho-ribonucleotide-RNA + a 5'-end dephospho-ribonucleoside-RNA + GTP + H2O = a ribonucleotidyl-ribonucleotide-RNA + GMP + diphosphate + H(+). Functionally, catalytic subunit of the tRNA-splicing ligase complex that acts by directly joining spliced tRNA halves to mature-sized tRNAs. Required for the ligation of mRNAs and specifically, regulates xbp-1 mRNA splicing during the endoplasmic reticulum stress-induced unfolded protein response. Has a neuroprotective role in the age-dependent degeneration of dopamine neurons, which is mediated by xbp-1. This Caenorhabditis elegans protein is RNA-splicing ligase RtcB homolog.